The following is a 65-amino-acid chain: Small, acid-soluble spore protein H 1 (65 aa).

This sequence belongs to the SspH family.

Its subcellular location is the spore core. The chain is Small, acid-soluble spore protein H 1 from Clostridium botulinum (strain Langeland / NCTC 10281 / Type F).